The sequence spans 69 residues: Large ribosomal subunit protein bL31 (69 aa).

Zn(2+)-binding residues include C16, C18, C37, and C40.

It belongs to the bacterial ribosomal protein bL31 family. Type A subfamily. In terms of assembly, part of the 50S ribosomal subunit. Zn(2+) is required as a cofactor.

Binds the 23S rRNA. The polypeptide is Large ribosomal subunit protein bL31 (Buchnera aphidicola subsp. Baizongia pistaciae (strain Bp)).